We begin with the raw amino-acid sequence, 562 residues long: Phosphoglucomutase-1 (562 aa).

M1 carries the post-translational modification N-acetylmethionine. An N6-acetyllysine modification is found at K16. R23 contacts alpha-D-glucose 1,6-bisphosphate. T115 carries the phosphothreonine modification. S117 lines the alpha-D-glucose 1,6-bisphosphate pocket. S117 serves as the catalytic Phosphoserine intermediate. S117 is a Mg(2+) binding site. S117 and S134 each carry phosphoserine. T185 carries the post-translational modification Phosphothreonine. S213 is subject to Phosphoserine. Mg(2+) contacts are provided by D288, D290, and D292. D292 and R293 together coordinate alpha-D-glucose 1,6-bisphosphate. An N6-acetyllysine modification is found at K349. Position 353 is a phosphotyrosine (Y353). Position 357 (T357) interacts with alpha-D-glucose 1,6-bisphosphate. Phosphoserine is present on S369. Alpha-D-glucose 1,6-bisphosphate contacts are provided by E376, S378, and K389. The residue at position 378 (S378) is a Phosphoserine. K419 carries the N6-succinyllysine modification. Residue T467 is modified to Phosphothreonine; by PAK1. A phosphoserine mark is found at S485 and S505. At T507 the chain carries Phosphothreonine. S509 and S541 each carry phosphoserine.

It belongs to the phosphohexose mutase family. Monomer. Mg(2+) serves as cofactor. In terms of processing, isoform 2 is the major calmodulin-dependent phosphoprotein in junctional skeletal sarcoplasmic reticulum vesicles. Post-translationally, phosphorylation at Thr-467 by PAK1 significantly enhances enzymatic activity.

The protein localises to the cytoplasm. It localises to the sarcoplasmic reticulum. The enzyme catalyses alpha-D-glucose 1-phosphate = alpha-D-glucose 6-phosphate. It carries out the reaction O-phospho-L-seryl-[protein] + alpha-D-glucose 1-phosphate = alpha-D-glucose 1,6-bisphosphate + L-seryl-[protein]. It catalyses the reaction alpha-D-glucose 1,6-bisphosphate + L-seryl-[protein] = O-phospho-L-seryl-[protein] + alpha-D-glucose 6-phosphate. Its activity is regulated as follows. Glucose-1,6-bisphosphate enhances phosphorylation of the active site Ser-117, and thereby increases enzyme activity. Functionally, catalyzes the reversible isomerization of alpha-D-glucose 1-phosphate to alpha-D-glucose 6-phosphate. The mechanism proceeds via the intermediate compound alpha-D-glucose 1,6-bisphosphate. This enzyme participates in both the breakdown and synthesis of glucose. The chain is Phosphoglucomutase-1 (PGM1) from Oryctolagus cuniculus (Rabbit).